Consider the following 692-residue polypeptide: Elongation factor G (692 aa).

The tr-type G domain occupies 8–283 (NRIRNIGIAA…AVIDYLPAPT (276 aa)). GTP contacts are provided by residues 17–24 (AHIDAGKT), 81–85 (DTPGH), and 135–138 (NKMD).

Belongs to the TRAFAC class translation factor GTPase superfamily. Classic translation factor GTPase family. EF-G/EF-2 subfamily.

It localises to the cytoplasm. Functionally, catalyzes the GTP-dependent ribosomal translocation step during translation elongation. During this step, the ribosome changes from the pre-translocational (PRE) to the post-translocational (POST) state as the newly formed A-site-bound peptidyl-tRNA and P-site-bound deacylated tRNA move to the P and E sites, respectively. Catalyzes the coordinated movement of the two tRNA molecules, the mRNA and conformational changes in the ribosome. In Helicobacter pylori (strain J99 / ATCC 700824) (Campylobacter pylori J99), this protein is Elongation factor G (fusA).